Reading from the N-terminus, the 500-residue chain is Perfringolysin O (500 aa).

An N-terminal signal peptide occupies residues 1–28; it reads MIRFKKTKLIASIAMALCLFSQPVISFS. The next 4 beta stranded transmembrane spans lie at 189-202, 209-218, 287-296, and 304-316; these read KSQISSALNVNAKV, VDFNAVANNE, SKDVQAAFKA, and KNSQQYKDIYENS. A Conserved undecapeptide motif is present at residues 458–468; it reads ECTGLAWEWWR. The Cholesterol binding motif lies at 490-491; sequence TL.

The protein belongs to the cholesterol-dependent cytolysin family. Homooligomeric pore complex of 35 to 50 subunits; when inserted in the host membrane.

The protein resides in the secreted. Its subcellular location is the host cell membrane. Its function is as follows. A cholesterol-dependent toxin that causes cytolysis by forming pores in cholesterol containing host membranes. After binding to target membranes, the protein assembles into a pre-pore complex. A conformation change leads to insertion in the host membrane and formation of an oligomeric pore complex. Cholesterol is required for binding to host cell membranes, membrane insertion and pore formation; cholesterol binding is mediated by a Thr-Leu pair in the C-terminus. Can be reversibly inactivated by oxidation. The chain is Perfringolysin O (pfo) from Clostridium perfringens (strain ATCC 13124 / DSM 756 / JCM 1290 / NCIMB 6125 / NCTC 8237 / Type A).